The following is a 190-amino-acid chain: MGVKIGINQIKKDMFIVHDGQPYRVLDYDHVKPGKGQAFVRVKAKNMKTGNVIEITYKSSESIELADFEQRQMSYSYFDGDSYWFIDMNTGDMIAVPASVLGDEAQFLKEGMEVFIFLDKGQPIGVELPKSAVYEVIETEPGFKGDTATSTLKPAKIDTGATVQVPLFINEGDKIKIDTRTGKYIERVNE.

The protein belongs to the elongation factor P family.

It is found in the cytoplasm. It participates in protein biosynthesis; polypeptide chain elongation. Involved in peptide bond synthesis. Stimulates efficient translation and peptide-bond synthesis on native or reconstituted 70S ribosomes in vitro. Probably functions indirectly by altering the affinity of the ribosome for aminoacyl-tRNA, thus increasing their reactivity as acceptors for peptidyl transferase. The polypeptide is Elongation factor P (Persephonella marina (strain DSM 14350 / EX-H1)).